An 822-amino-acid polypeptide reads, in one-letter code: Nucleolar complex protein 3 (822 aa).

3 disordered regions span residues 1 to 86 (MGTK…DGDD), 106 to 142 (ANKR…KEQD), and 172 to 199 (KPKQ…EDSD). Positions 13–23 (RAAHLKSKKTP) are enriched in basic residues. A compositionally biased stretch (basic and acidic residues) spans 35–45 (KRDQLKSKREQ). The short motif at 41 to 48 (SKREQGQN) is the Nuclear localization signal element. Residues 76-86 (PLEEDNEDGDD) are compositionally biased toward acidic residues. The segment covering 116 to 126 (TGENDPDQGQS) has biased composition (polar residues). Acidic residues predominate over residues 181–199 (EEEEDDSEEDGDTEYEDSD). The residue at position 187 (serine 187) is a Phosphoserine. Threonine 193 carries the phosphothreonine modification. Serine 198 carries the phosphoserine modification. A coiled-coil region spans residues 445–509 (KIKNVNLDAE…NKQAKHQKLT (65 aa)).

The protein belongs to the CBF/MAK21 family.

Its subcellular location is the nucleus. It is found in the nucleolus. The protein is Nucleolar complex protein 3 of Drosophila melanogaster (Fruit fly).